A 388-amino-acid polypeptide reads, in one-letter code: MGLNHLTLVCSAIALLSIFVVSQAGVTSTHVRVSEPSEEMPLETFPPPACYNAPEQVHITQGDHAGRGMIISWVTPLNEDGSNVVTYWIANSDGSDNKSALATTSSYRYFNYTSGYLYHATIKGLETLYNYMSNPKGQAVLFAGDLSYADDHPNHDQRKWDSYGRFVEPSAAYQPWIWAAGNHEIDYAESIPHKVHLHFGTKSNELQLTSSYSPLTQLMDELKKVNRSETPWLIVLVHAPWYNSNNYHYMEGESMRVTFEPWFVENKVDIVFAGHVHAYERSERISNIQYNITDGMSTPVKDQNAPVYITIGDGGNIEGIANNFIDPQPSYSAFREASFGHAILEIKNRTHAHYTWHRNKEDEFIPEAVIADSIWLKNRYYLREEETS.

The first 24 residues, 1–24 (MGLNHLTLVCSAIALLSIFVVSQA), serve as a signal peptide directing secretion. 2 N-linked (GlcNAc...) asparagine glycosylation sites follow: N97 and N111. Residues D145 and Y148 each contribute to the Fe cation site. Position 145 (D145) interacts with Zn(2+). N182 provides a ligand contact to Zn(2+). Residue N182 coordinates substrate. N-linked (GlcNAc...) asparagine glycosylation is present at N226. H238 contributes to the Zn(2+) binding site. The Proton donor role is filled by H248. H275 contributes to the Zn(2+) binding site. 275–277 (HVH) is a binding site for substrate. H277 contacts Fe cation. N-linked (GlcNAc...) asparagine glycosylation is found at N291 and N348.

This sequence belongs to the metallophosphoesterase superfamily. Purple acid phosphatase family. Homodimer. The cofactor is Fe cation. Zn(2+) is required as a cofactor. As to expression, specifically expressed in flowers.

The protein localises to the secreted. The catalysed reaction is a phosphate monoester + H2O = an alcohol + phosphate. This Arabidopsis thaliana (Mouse-ear cress) protein is Purple acid phosphatase 19 (PAP19).